The primary structure comprises 176 residues: Cytochrome b (176 aa).

Transmembrane regions (helical) follow at residues phenylalanine 33–methionine 53, tryptophan 77–valine 98, and tryptophan 113–leucine 133. Positions 83 and 97 each coordinate heme b.

It belongs to the cytochrome b family. As to quaternary structure, the cytochrome bc1 complex contains 11 subunits: 3 respiratory subunits (MT-CYB, CYC1 and UQCRFS1), 2 core proteins (UQCRC1 and UQCRC2) and 6 low-molecular weight proteins (UQCRH/QCR6, UQCRB/QCR7, UQCRQ/QCR8, UQCR10/QCR9, UQCR11/QCR10 and a cleavage product of UQCRFS1). This cytochrome bc1 complex then forms a dimer. Requires heme b as cofactor.

It is found in the mitochondrion inner membrane. Its function is as follows. Component of the ubiquinol-cytochrome c reductase complex (complex III or cytochrome b-c1 complex) that is part of the mitochondrial respiratory chain. The b-c1 complex mediates electron transfer from ubiquinol to cytochrome c. Contributes to the generation of a proton gradient across the mitochondrial membrane that is then used for ATP synthesis. The polypeptide is Cytochrome b (MT-CYB) (Myotis leibii (Eastern small-footed myotis)).